The primary structure comprises 84 residues: Putative membrane protein insertion efficiency factor (84 aa).

The segment at 61–84 (SQGFEDPLPPNTKRTNLTHGRQTK) is disordered. Positions 72-84 (TKRTNLTHGRQTK) are enriched in polar residues.

It belongs to the UPF0161 family.

The protein resides in the cell inner membrane. In terms of biological role, could be involved in insertion of integral membrane proteins into the membrane. The sequence is that of Putative membrane protein insertion efficiency factor from Leptospira borgpetersenii serovar Hardjo-bovis (strain JB197).